Reading from the N-terminus, the 771-residue chain is Probable exo-1,4-beta-xylosidase bxlB (771 aa).

Residues methionine 1–serine 25 form the signal peptide. An N-linked (GlcNAc...) asparagine glycan is attached at asparagine 67. Residue aspartate 293 is part of the active site. N-linked (GlcNAc...) asparagine glycosylation is found at asparagine 305, asparagine 345, asparagine 423, and asparagine 464.

This sequence belongs to the glycosyl hydrolase 3 family.

It localises to the secreted. The catalysed reaction is Hydrolysis of (1-&gt;4)-beta-D-xylans, to remove successive D-xylose residues from the non-reducing termini.. Its pathway is glycan degradation; xylan degradation. Xylan 1,4-beta-xylosidase involved in the hydrolysis of xylan, a major structural heterogeneous polysaccharide found in plant biomass representing the second most abundant polysaccharide in the biosphere, after cellulose. This chain is Probable exo-1,4-beta-xylosidase bxlB (bxlB), found in Aspergillus fumigatus (strain CBS 144.89 / FGSC A1163 / CEA10) (Neosartorya fumigata).